Reading from the N-terminus, the 269-residue chain is MPELPEVEVSRMGISPHLVGETIKTLTFRTPKLRWDIPQELKRLEGQVIRSISRRAKYLLIETDTGTAIVHLGMSGSLRVLDADFPPAKHDHVDLKLTNGKILRYNDPRRFGAWLWSAPDEIHTVLLGSGPEPLTDDFNADYIAEKAEKRKVAVKQFIMDNKVVVGVGNIYANEALFSSRINPLRSASKVTKQEWLLLTKEIKQVLATAIRQGGTTLKDFAQADGKPGYFAQELQVYGKAGEQCPNCAELIQELKIGQRNTFYCSSCQV.

Residue proline 2 is the Schiff-base intermediate with DNA of the active site. Catalysis depends on glutamate 3, which acts as the Proton donor. Lysine 57 serves as the catalytic Proton donor; for beta-elimination activity. The DNA site is built by histidine 90, arginine 109, and arginine 150. An FPG-type zinc finger spans residues 235–269 (QVYGKAGEQCPNCAELIQELKIGQRNTFYCSSCQV). The active-site Proton donor; for delta-elimination activity is arginine 259.

Belongs to the FPG family. In terms of assembly, monomer. The cofactor is Zn(2+).

The catalysed reaction is Hydrolysis of DNA containing ring-opened 7-methylguanine residues, releasing 2,6-diamino-4-hydroxy-5-(N-methyl)formamidopyrimidine.. The enzyme catalyses 2'-deoxyribonucleotide-(2'-deoxyribose 5'-phosphate)-2'-deoxyribonucleotide-DNA = a 3'-end 2'-deoxyribonucleotide-(2,3-dehydro-2,3-deoxyribose 5'-phosphate)-DNA + a 5'-end 5'-phospho-2'-deoxyribonucleoside-DNA + H(+). Functionally, involved in base excision repair of DNA damaged by oxidation or by mutagenic agents. Acts as a DNA glycosylase that recognizes and removes damaged bases. Has a preference for oxidized purines, such as 7,8-dihydro-8-oxoguanine (8-oxoG). Has AP (apurinic/apyrimidinic) lyase activity and introduces nicks in the DNA strand. Cleaves the DNA backbone by beta-delta elimination to generate a single-strand break at the site of the removed base with both 3'- and 5'-phosphates. The chain is Formamidopyrimidine-DNA glycosylase from Vibrio atlanticus (strain LGP32) (Vibrio splendidus (strain Mel32)).